The primary structure comprises 518 residues: Cytochrome P450 709B3 (518 aa).

A helical transmembrane segment spans residues 3-23; that stretch reads LISTINLLTIVLLLFVVSKIW. Cysteine 465 provides a ligand contact to heme.

This sequence belongs to the cytochrome P450 family. Heme serves as cofactor. In terms of tissue distribution, highly expressed in rosette leaves and siliques, and at lower levels in flowers.

It is found in the membrane. Plays a role in abscisic acid (ABA) and salt stress response. May regulate the salt stress response independently of well-characterized pathways. Does not function as cytokinin hydroxylase in yeast heterologous system. The sequence is that of Cytochrome P450 709B3 from Arabidopsis thaliana (Mouse-ear cress).